A 287-amino-acid polypeptide reads, in one-letter code: Movement protein BC1 (287 aa).

It belongs to the begomovirus movement protein BC1 family. As to quaternary structure, binds to dimeric supercoiled plasmid DNA. In terms of processing, phosphorylated.

The protein resides in the host cell membrane. The protein localises to the host microsome membrane. Its subcellular location is the host endoplasmic reticulum membrane. Functionally, transports viral genome to neighboring plant cells directly through plasmosdesmata, without any budding. The movement protein allows efficient cell to cell propagation, by bypassing the host cell wall barrier. Begomovirus genome is shuttled out of nucleus by Nuclear shuttle protein (NSP) and the movement protein transports the DNA-NSP complex to cell plasmodesmata and facilitates further movement across the cell wall. The sequence is that of Movement protein BC1 from Manihot esculenta (Cassava).